Consider the following 667-residue polypeptide: DNA ligase (667 aa).

Residues 32 to 36, 81 to 82, and E110 contribute to the NAD(+) site; these read DSEYD and SL. K112 (N6-AMP-lysine intermediate) is an active-site residue. NAD(+)-binding residues include R133, E167, K283, and K307. C401, C404, C419, and C424 together coordinate Zn(2+). Residues 586 to 667 enclose the BRCT domain; the sequence is EGHPEFSGKT…FVDKQNELNS (82 aa).

Belongs to the NAD-dependent DNA ligase family. LigA subfamily. Requires Mg(2+) as cofactor. Mn(2+) is required as a cofactor.

The enzyme catalyses NAD(+) + (deoxyribonucleotide)n-3'-hydroxyl + 5'-phospho-(deoxyribonucleotide)m = (deoxyribonucleotide)n+m + AMP + beta-nicotinamide D-nucleotide.. In terms of biological role, DNA ligase that catalyzes the formation of phosphodiester linkages between 5'-phosphoryl and 3'-hydroxyl groups in double-stranded DNA using NAD as a coenzyme and as the energy source for the reaction. It is essential for DNA replication and repair of damaged DNA. This chain is DNA ligase, found in Staphylococcus aureus (strain USA300).